The chain runs to 3258 residues: Protein unc-80 homolog (3258 aa).

Residues 152-173 (VENQGSPGQPCQSSSNDEEENN) form a disordered region. Residues 155-166 (QGSPGQPCQSSS) are compositionally biased toward low complexity. Serine 257 carries the post-translational modification Phosphoserine. Disordered stretches follow at residues 291 to 316 (RGNS…RASL), 449 to 468 (RKED…GKRR), 522 to 560 (RRGS…HGEN), 697 to 717 (KKSE…GAFQ), 732 to 784 (PAVS…TPVS), 963 to 1019 (PGKK…EQMQ), 1034 to 1076 (KSQS…ISLR), 1404 to 1447 (EDSK…MSNA), and 1817 to 1836 (AVSA…HHVP). A compositionally biased stretch (polar residues) spans 295–307 (FDGSLSSQTSQER). Position 525 is a phosphoserine (serine 525). The segment covering 698–712 (KSENKENETLEKRPS) has biased composition (basic and acidic residues). Positions 732 to 767 (PAVSGAGDGGGEEGGGGDGGGGGGDGGGGGGGGGGP) are enriched in gly residues. Basic and acidic residues-rich tracts occupy residues 769–780 (EKNDKNQEKDES) and 965–974 (KKVEENEQES). The segment covering 1035 to 1052 (SQSAASDTSSQSEQDTSE) has biased composition (low complexity). Over residues 1066–1076 (ARSRSRRISLR) the composition is skewed to basic residues. Basic and acidic residues predominate over residues 1417 to 1429 (LKSDAGVEEKKEG). Transmembrane regions (helical) follow at residues 2268–2288 (PFVL…DAAN), 2398–2418 (IAAT…VEVL), 2785–2805 (GLAE…LVCF), and 2831–2851 (LALW…FVLL). Residues 2942 to 2964 (NTGTGTVWEQDSEPSQQASQDTL) are compositionally biased toward polar residues. The disordered stretch occupies residues 2942–2982 (NTGTGTVWEQDSEPSQQASQDTLSRTDEEDEENDSISMPSV). Serine 3042 carries the post-translational modification Phosphoserine. The segment at 3051 to 3213 (NLLVQQPLGR…DDFTGLETSS (163 aa)) is disordered. Over residues 3059–3068 (GRKRGLRQLR) the composition is skewed to basic residues. The segment covering 3088 to 3100 (RLSTTRRSIQPKT) has biased composition (polar residues). The segment covering 3117–3129 (PEPAAAPTDALPA) has biased composition (low complexity). Positions 3175–3186 (PTEEGEKEEDTE) are enriched in acidic residues.

This sequence belongs to the unc-80 family. In terms of assembly, NALCN complex consists of NALCN and auxiliary subunits, UNC79, UNC80 and NACL1. These auxiliary subunits are essential for the NALCN complex function. Interacts (via N-terminus half) with NALCN; this interaction facilitates NALCN surface localization. Interacts with UNC79. UNC80 bridges NALCN to UNC79. Phosphorylated on tyrosine residues. As to expression, moderately expressed in fetal brain, spinal cord, skeletal muscle, thymus, spleen, fetal liver, small intestine, colon, kidney and uterus. Highly expressed in adrenal gland, prostate and testis, as well as in brain and cerebellum.

The protein localises to the cell membrane. In terms of biological role, auxiliary subunit of the NALCN sodium channel complex, a voltage-gated ion channel responsible for the resting Na(+) permeability that controls neuronal excitability. Activated by neuropeptides substance P, neurotensin, and extracellular Ca(2+) that regulates neuronal excitability by controlling the sizes of NALCN-dependent sodium-leak current. UNC80 is essential for NALCN sensitivity to extracellular Ca(2+). The protein is Protein unc-80 homolog of Homo sapiens (Human).